The sequence spans 274 residues: Diaminopimelate epimerase (274 aa).

Substrate-binding residues include asparagine 11, glutamine 44, and asparagine 64. Cysteine 73 (proton donor) is an active-site residue. Residues 74 to 75 (GN), asparagine 157, asparagine 190, and 208 to 209 (ER) contribute to the substrate site. Cysteine 217 (proton acceptor) is an active-site residue. 218-219 (GS) is a binding site for substrate.

This sequence belongs to the diaminopimelate epimerase family. As to quaternary structure, homodimer.

Its subcellular location is the cytoplasm. The catalysed reaction is (2S,6S)-2,6-diaminopimelate = meso-2,6-diaminopimelate. The protein operates within amino-acid biosynthesis; L-lysine biosynthesis via DAP pathway; DL-2,6-diaminopimelate from LL-2,6-diaminopimelate: step 1/1. Its function is as follows. Catalyzes the stereoinversion of LL-2,6-diaminopimelate (L,L-DAP) to meso-diaminopimelate (meso-DAP), a precursor of L-lysine and an essential component of the bacterial peptidoglycan. This is Diaminopimelate epimerase from Enterobacter sp. (strain 638).